The primary structure comprises 420 residues: ATP phosphoribosyltransferase regulatory subunit (420 aa).

The protein belongs to the class-II aminoacyl-tRNA synthetase family. HisZ subfamily. Heteromultimer composed of HisG and HisZ subunits.

The protein localises to the cytoplasm. Its pathway is amino-acid biosynthesis; L-histidine biosynthesis; L-histidine from 5-phospho-alpha-D-ribose 1-diphosphate: step 1/9. Its function is as follows. Required for the first step of histidine biosynthesis. May allow the feedback regulation of ATP phosphoribosyltransferase activity by histidine. The chain is ATP phosphoribosyltransferase regulatory subunit from Bacillus thuringiensis subsp. konkukian (strain 97-27).